Consider the following 522-residue polypeptide: Pectinesterase/pectinesterase inhibitor PPE8B (522 aa).

A signal peptide spans 1 to 30 (MPYLLMASHNPLPAGKQLLLLVLLCAFFSS). The interval 31 to 174 (SFIPFASCSI…TSLVQELLTQ (144 aa)) is pectinesterase inhibitor PPE8B. Asparagine 105, asparagine 118, asparagine 119, asparagine 218, asparagine 221, and asparagine 274 each carry an N-linked (GlcNAc...) asparagine glycan. The tract at residues 208 to 506 (DAIVAQDGTG…YTVAQFIEGN (299 aa)) is pectinesterase PPE8B. Residues threonine 283 and glutamine 313 each coordinate substrate. Aspartate 336 acts as the Proton donor; for pectinesterase activity in catalysis. A disulfide bridge links cysteine 350 with cysteine 370. The active-site Nucleophile; for pectinesterase activity is aspartate 357. A glycan (N-linked (GlcNAc...) asparagine) is linked at asparagine 405. Substrate-binding residues include arginine 426 and tryptophan 428. 2 N-linked (GlcNAc...) asparagine glycosylation sites follow: asparagine 489 and asparagine 496.

The protein in the N-terminal section; belongs to the PMEI family. It in the C-terminal section; belongs to the pectinesterase family.

The protein localises to the secreted. Its subcellular location is the cell wall. It catalyses the reaction [(1-&gt;4)-alpha-D-galacturonosyl methyl ester](n) + n H2O = [(1-&gt;4)-alpha-D-galacturonosyl](n) + n methanol + n H(+). It participates in glycan metabolism; pectin degradation; 2-dehydro-3-deoxy-D-gluconate from pectin: step 1/5. In terms of biological role, may have roles in the deposition of pectin in developing tissues and in the wall loosening and cell separation that occurs in cell expansion, fruit ripening and abscission. This Prunus persica (Peach) protein is Pectinesterase/pectinesterase inhibitor PPE8B.